The sequence spans 200 residues: Recombination protein RecR (200 aa).

The segment at 60 to 75 adopts a C4-type zinc-finger fold; the sequence is CVYCQALTEDDVCNIC. Positions 83–177 constitute a Toprim domain; the sequence is TKLCIIESML…KISRIGFGVP (95 aa).

The protein belongs to the RecR family.

Its function is as follows. May play a role in DNA repair. It seems to be involved in an RecBC-independent recombinational process of DNA repair. It may act with RecF and RecO. In Francisella tularensis subsp. mediasiatica (strain FSC147), this protein is Recombination protein RecR.